The primary structure comprises 953 residues: Ubiquitin carboxyl-terminal hydrolase CYLD (953 aa).

The interval cysteine 106–glycine 590 is interaction with TRIP. 2 CAP-Gly domains span residues leucine 153 to alanine 198 and aspartate 253 to cysteine 286. The tract at residues phenylalanine 318–glutamate 350 is disordered. Residues glycine 327–arginine 346 are compositionally biased toward polar residues. The residue at position 384 (serine 384) is a Phosphoserine. The segment at glutamate 387–glutamate 410 is disordered. The tract at residues aspartate 391–glycine 466 is interaction with TRAF2. Phosphoserine is present on residues serine 415 and serine 419. The interval leucine 467–glutamate 681 is interaction with IKBKG/NEMO. The CAP-Gly 3 domain maps to glycine 489 to lysine 532. The region spanning lysine 589 to proline 947 is the USP domain. The active-site Nucleophile is the cysteine 598. The segment at leucine 778–histidine 830 is B-box. Zn(2+)-binding residues include cysteine 785, cysteine 788, cysteine 796, cysteine 799, cysteine 814, cysteine 817, histidine 822, and histidine 830. Histidine 868 (proton acceptor) is an active-site residue.

Belongs to the peptidase C19 family. In terms of assembly, interacts (via CAP-Gly domain) with IKBKG/NEMO (via proline-rich C-terminal region). Interacts with TRAF2 and TRIP. Interacts with PLK1, DVL1, DVL3, MAVS, TBK1, IKKE and RIGI. Interacts (via CAP-Gly domain) with microtubules. Interacts with HDAC6 and BCL3. Interacts with MAP3K7. Identified in a complex with TRAF6 and SQSTM1. Interacts with OPTN and SQSTM1. Interacts with CEP350. Interacts with RNF31; the interaction is indirect and is mediated via SPATA2. Interacts with SPATA2 (via the PUB domain); the interaction is direct and recruits CYLD to the LUBAC complex, thereby regulating TNF-alpha-induced necroptosis. In terms of processing, phosphorylated on several serine residues by IKKA and/or IKKB in response to immune stimuli. Phosphorylation requires IKBKG. Phosphorylation abolishes TRAF2 deubiquitination, interferes with the activation of Jun kinases, and strongly reduces CD40-dependent gene activation by NF-kappa-B. Post-translationally, ubiquitinated. Polyubiquitinated in hepatocytes treated with palmitic acid. Ubiquitination is mediated by E3 ligase TRIM47 and leads to proteasomal degradation.

It is found in the cytoplasm. It localises to the perinuclear region. Its subcellular location is the cytoskeleton. The protein resides in the cell membrane. The protein localises to the microtubule organizing center. It is found in the centrosome. It localises to the spindle. Its subcellular location is the cilium basal body. It carries out the reaction Thiol-dependent hydrolysis of ester, thioester, amide, peptide and isopeptide bonds formed by the C-terminal Gly of ubiquitin (a 76-residue protein attached to proteins as an intracellular targeting signal).. Deubiquitinase that specifically cleaves 'Lys-63'- and linear 'Met-1'-linked polyubiquitin chains and is involved in NF-kappa-B activation and TNF-alpha-induced necroptosis. Negatively regulates NF-kappa-B activation by deubiquitinating upstream signaling factors. Contributes to the regulation of cell survival, proliferation and differentiation via its effects on NF-kappa-B activation. Negative regulator of Wnt signaling. Inhibits HDAC6 and thereby promotes acetylation of alpha-tubulin and stabilization of microtubules. Plays a role in the regulation of microtubule dynamics, and thereby contributes to the regulation of cell proliferation, cell polarization, cell migration, and angiogenesis. Required for normal cell cycle progress and normal cytokinesis. Inhibits nuclear translocation of NF-kappa-B. Plays a role in the regulation of inflammation and the innate immune response, via its effects on NF-kappa-B activation. Dispensable for the maturation of intrathymic natural killer cells, but required for the continued survival of immature natural killer cells. Negatively regulates TNFRSF11A signaling and osteoclastogenesis. Involved in the regulation of ciliogenesis, allowing ciliary basal bodies to migrate and dock to the plasma membrane; this process does not depend on NF-kappa-B activation. Ability to remove linear ('Met-1'-linked) polyubiquitin chains regulates innate immunity and TNF-alpha-induced necroptosis: recruited to the LUBAC complex via interaction with SPATA2 and restricts linear polyubiquitin formation on target proteins. Regulates innate immunity by restricting linear polyubiquitin formation on RIPK2 in response to NOD2 stimulation. Involved in TNF-alpha-induced necroptosis by removing linear ('Met-1'-linked) polyubiquitin chains from RIPK1, thereby regulating the kinase activity of RIPK1. Negatively regulates intestinal inflammation by removing 'Lys-63' linked polyubiquitin chain of NLRP6, thereby reducing the interaction between NLRP6 and PYCARD/ASC and formation of the NLRP6 inflammasome. Does not catalyze deubiquitination of heterotypic 'Lys-63'-/'Lys-48'-linked branched ubiquitin chains. Removes 'Lys-63' linked polyubiquitin chain of MAP3K7, which inhibits phosphorylation and blocks downstream activation of the JNK-p38 kinase cascades. Also removes 'Lys-63'-linked polyubiquitin chains of MAP3K1 and MA3P3K3, which inhibit their interaction with MAP2K1 and MAP2K2. The polypeptide is Ubiquitin carboxyl-terminal hydrolase CYLD (Cyld) (Rattus norvegicus (Rat)).